A 230-amino-acid polypeptide reads, in one-letter code: MLYAFKLGRKLRGEEPWCPEKGGKGGSSDKSAKYAAEAQKYAADLQNQQFNTIMNNLKPFTPLADKYVGSLENLSSLEGQGQALNQYYNSQQYKDLAGQARYQSLAAAEATGGLGSTATSNQLATIAPTLGQQWLSGQMNNYQNLANIGLGALQGQANAGQTYANNMSQISQQSAALAAANANRPSAMQSAIGGGASGAIAGAGLAKLIGSSTPWGAAIGGGLGLLGSLF.

The protein belongs to the podoviruses gp7 family.

Component of the phage injection machinery. Required for injection of the phage DNA into the host. In Enterobacteria phage HK620 (Bacteriophage HK620), this protein is DNA transfer protein gp7 (7).